A 49-amino-acid polypeptide reads, in one-letter code: Lectin alpha chain (49 aa).

Belongs to the leguminous lectin family. Homotetramer. In terms of processing, the beta and gamma chains are produced by partial proteolytic processing of the lectin alpha chain by an asparaginyl endopeptidase. Mixture of 60% alpha lectin and 40% of its beta and gamma proteolytic fragments. As to expression, seed.

In terms of biological role, D-mannose/D-glucose-binding lectin. This chain is Lectin alpha chain, found in Dioclea violacea.